The chain runs to 275 residues: Tryptophan synthase alpha chain (275 aa).

Residues Glu51 and Asp62 each act as proton acceptor in the active site.

Belongs to the TrpA family. Tetramer of two alpha and two beta chains.

The enzyme catalyses (1S,2R)-1-C-(indol-3-yl)glycerol 3-phosphate + L-serine = D-glyceraldehyde 3-phosphate + L-tryptophan + H2O. The protein operates within amino-acid biosynthesis; L-tryptophan biosynthesis; L-tryptophan from chorismate: step 5/5. In terms of biological role, the alpha subunit is responsible for the aldol cleavage of indoleglycerol phosphate to indole and glyceraldehyde 3-phosphate. The protein is Tryptophan synthase alpha chain of Methanopyrus kandleri (strain AV19 / DSM 6324 / JCM 9639 / NBRC 100938).